Here is a 1182-residue protein sequence, read N- to C-terminus: CRISPR-associated endoribonuclease Cas13a (1182 aa).

Residues 132 to 279 (FNNLIEKVQN…ENNSDNKLKQ (148 aa)) adopt a coiled-coil conformation. An HEPN-like fold 1 region spans residues 366–508 (YIKNTGQLET…NNEEIKGYFI (143 aa)). Residues 896–955 (KVEKENIEDYNKKEEIEQKKKSNIEKLQDLKVELHKKWEQNKITEKEIEKYNNTTRKINE) are a coiled coil. The segment at 965-1120 (LQNVYLLHEM…QNHILKSTKT (156 aa)) is HEPN-like fold 2.

It belongs to the CRISPR-associated endoribonuclease Cas13a family. It depends on a divalent metal cation as a cofactor.

With respect to regulation, target RNA acts as an activator for non-specific ssRNA degradation. CRISPR (clustered regularly interspaced short palindromic repeat), is an adaptive immune system that provides protection against mobile genetic elements (viruses, transposable elements and conjugative plasmids). CRISPR clusters contain sequences complementary to antecedent mobile elements and target invading nucleic acids. Unlike many single-component effectors, this CRISPR-Cas system targets RNA. CRISPR clusters are transcribed from pre-CRISPR RNA (crRNA) and processed into crRNA by this protein. Cleaves linear target ssRNA in a pre-crRNA-dependent fashion, preferentially before U residues. Binding a viable target RNA target activates this protein for non-specific RNA degradation in vitro (called collateral RNA degradation), which is fairly sensitive as it requires picomolar levels of viable target RNA. This chain is CRISPR-associated endoribonuclease Cas13a, found in Leptotrichia wadei (strain F0279).